The following is a 512-amino-acid chain: Maturase K (512 aa).

This sequence belongs to the intron maturase 2 family. MatK subfamily.

It is found in the plastid. Its subcellular location is the chloroplast. In terms of biological role, usually encoded in the trnK tRNA gene intron. Probably assists in splicing its own and other chloroplast group II introns. The polypeptide is Maturase K (Filarum manserichense).